The following is a 466-amino-acid chain: Cytochrome P450 85A1 (466 aa).

The chain crosses the membrane as a helical span at residues 1–21; it reads MVLAVLIGVLVGIVLVSSLLL. Heme is bound at residue Cys416.

It belongs to the cytochrome P450 family. Heme serves as cofactor.

Its subcellular location is the membrane. It catalyses the reaction 6-deoxoteasterone + reduced [NADPH--hemoprotein reductase] + O2 = 6alpha-hydroxyteasterone + oxidized [NADPH--hemoprotein reductase] + H2O + H(+). The catalysed reaction is 6alpha-hydroxytyphasterol + reduced [NADPH--hemoprotein reductase] + O2 = teasterone + oxidized [NADPH--hemoprotein reductase] + 2 H2O + H(+). The enzyme catalyses 3-dehydro-6-deoxoteasterone + reduced [NADPH--hemoprotein reductase] + O2 = 3-dehydro-6alpha-hydroxyteasterone + oxidized [NADPH--hemoprotein reductase] + H2O + H(+). It carries out the reaction 3-dehydro-6alpha-hydroxyteasterone + reduced [NADPH--hemoprotein reductase] + O2 = 3-dehydroteasterone + oxidized [NADPH--hemoprotein reductase] + 2 H2O + H(+). It catalyses the reaction 6-deoxotyphasterol + reduced [NADPH--hemoprotein reductase] + O2 = 6alpha-hydroxytyphasterol + oxidized [NADPH--hemoprotein reductase] + H2O + H(+). The catalysed reaction is 6alpha-hydroxytyphasterol + reduced [NADPH--hemoprotein reductase] + O2 = typhasterol + oxidized [NADPH--hemoprotein reductase] + 2 H2O + H(+). The enzyme catalyses 6-deoxocastasterone + reduced [NADPH--hemoprotein reductase] + O2 = 6alpha-hydroxycastasterone + oxidized [NADPH--hemoprotein reductase] + H2O + H(+). It carries out the reaction 6alpha-hydroxycastasterone + reduced [NADPH--hemoprotein reductase] + O2 = castasterone + oxidized [NADPH--hemoprotein reductase] + 2 H2O + H(+). It catalyses the reaction 3-dehydro-6-deoxoteasterone + 2 reduced [NADPH--hemoprotein reductase] + 2 O2 = 3-dehydroteasterone + 2 oxidized [NADPH--hemoprotein reductase] + 3 H2O + 2 H(+). The catalysed reaction is 6-deoxocastasterone + 2 reduced [NADPH--hemoprotein reductase] + 2 O2 = castasterone + 2 oxidized [NADPH--hemoprotein reductase] + 3 H2O + 2 H(+). The enzyme catalyses 6-deoxoteasterone + 2 reduced [NADPH--hemoprotein reductase] + 2 O2 = teasterone + 2 oxidized [NADPH--hemoprotein reductase] + 3 H2O + 2 H(+). It carries out the reaction 6-deoxotyphasterol + 2 reduced [NADPH--hemoprotein reductase] + 2 O2 = typhasterol + 2 oxidized [NADPH--hemoprotein reductase] + 3 H2O + 2 H(+). Its pathway is plant hormone biosynthesis; brassinosteroid biosynthesis. Involved in reduction steps of the biosynthesis of plant campesterol-derivative steroids, ending to castasterone (CS) but missing brassinolide (BL). Catalyzes the C6-oxidation step in brassinosteroids biosynthesis; the conversion of 6-deoxoteasterone (6-deoxoTE) to teasterone (TE), 3-dehydro-6-deoxoteasterone (6-deoxo3DT, 6-deoxo-3-DHT) to 3-dehydroteasterone (3DT, 3-DHT), 6-deoxotyphasterol (6-deoxoTY) to typhasterol (TY) and of 6-deoxocastasterone (6-deoxoCS) to castasterone (CS). In Brachypodium distachyon (Purple false brome), this protein is Cytochrome P450 85A1.